Here is a 351-residue protein sequence, read N- to C-terminus: DNA polymerase IV (351 aa).

The 182-residue stretch at 4–185 folds into the UmuC domain; it reads IIHVDMDCFF…LPLAKIPGVG (182 aa). Mg(2+) contacts are provided by Asp-8 and Asp-103. Residue Glu-104 is part of the active site.

The protein belongs to the DNA polymerase type-Y family. In terms of assembly, monomer. Requires Mg(2+) as cofactor.

The protein localises to the cytoplasm. It carries out the reaction DNA(n) + a 2'-deoxyribonucleoside 5'-triphosphate = DNA(n+1) + diphosphate. Poorly processive, error-prone DNA polymerase involved in untargeted mutagenesis. Copies undamaged DNA at stalled replication forks, which arise in vivo from mismatched or misaligned primer ends. These misaligned primers can be extended by PolIV. Exhibits no 3'-5' exonuclease (proofreading) activity. May be involved in translesional synthesis, in conjunction with the beta clamp from PolIII. The chain is DNA polymerase IV from Escherichia coli O9:H4 (strain HS).